The sequence spans 1272 residues: Magnesium-chelatase subunit H (1272 aa).

The protein belongs to the Mg-chelatase subunit H family.

The enzyme catalyses protoporphyrin IX + Mg(2+) + ATP + H2O = Mg-protoporphyrin IX + ADP + phosphate + 3 H(+). It functions in the pathway porphyrin-containing compound metabolism; bacteriochlorophyll biosynthesis (light-independent). Functionally, involved in bacteriochlorophyll pigment biosynthesis; introduces a magnesium ion into protoporphyrin IX to yield Mg-protoroporphyrin IX. The sequence is that of Magnesium-chelatase subunit H (bchH) from Chlorobaculum parvum (strain DSM 263 / NCIMB 8327) (Chlorobium vibrioforme subsp. thiosulfatophilum).